Consider the following 955-residue polypeptide: Glycine dehydrogenase (decarboxylating) (955 aa).

Position 702 is an N6-(pyridoxal phosphate)lysine (Lys-702).

It belongs to the GcvP family. In terms of assembly, the glycine cleavage system is composed of four proteins: P, T, L and H. Pyridoxal 5'-phosphate is required as a cofactor.

It catalyses the reaction N(6)-[(R)-lipoyl]-L-lysyl-[glycine-cleavage complex H protein] + glycine + H(+) = N(6)-[(R)-S(8)-aminomethyldihydrolipoyl]-L-lysyl-[glycine-cleavage complex H protein] + CO2. The glycine cleavage system catalyzes the degradation of glycine. The P protein binds the alpha-amino group of glycine through its pyridoxal phosphate cofactor; CO(2) is released and the remaining methylamine moiety is then transferred to the lipoamide cofactor of the H protein. The protein is Glycine dehydrogenase (decarboxylating) of Bordetella avium (strain 197N).